A 196-amino-acid chain; its full sequence is O-methyltransferase dpmpI (196 aa).

Residues 127 to 128 (GG), D152, and 174 to 175 (SF) each bind S-adenosyl-L-methionine. The interval 166–196 (NGIEAVPHSFEDPQPIKSKSPRLDNLARERL) is disordered. The span at 186 to 196 (PRLDNLARERL) shows a compositional bias: basic and acidic residues.

Belongs to the class I-like SAM-binding methyltransferase superfamily. Cation-independent O-methyltransferase family.

It participates in secondary metabolite biosynthesis; terpenoid biosynthesis. O-methyltransferase; part of the gene cluster that mediates the biosynthesis of diterpenoid pyrones. The first step of the pathway is the synthesis of the alpha-pyrone moiety by the polyketide synthase dpmpA via condensation of one acetyl-CoA starter unit with 3 malonyl-CoA units and 2 methylations. The alpha-pyrone is then combined with geranylgeranyl pyrophosphate (GGPP) formed by the GGPP synthase dpmpD through the action of the prenyltransferase dpmpC to yield a linear alpha-pyrone diterpenoid. Subsequent steps in the diterpenoid pyrone biosynthetic pathway involve the decalin core formation, which is initiated by the epoxidation of the C10-C11 olefin by the FAD-dependent oxidoreductase dpmpE, and is followed by a cyclization cascade catalyzed by the terpene cyclase dpmpB. The short chain dehydrogenase/reductase dpmpG then oxidizes the 8S hydroxy group to a ketone and the short chain dehydrogenase/reductase dpmpH reduces the ketone to the 8R hydroxy group to yield higginsianin B. Higginsianin B is further methylated by the methyltransferase dpmpI to produce the intermediate named FDDP B. The cytochrome P450 monooxygenase dpmpJ then oxidizes the C-26 methyl to primary alcohol, producing the final diterpenoid pyrone with a C-26 primary alcohol on the gamma-pyrone moiety named FDDP C. The protein is O-methyltransferase dpmpI of Macrophomina phaseolina (strain MS6) (Charcoal rot fungus).